The chain runs to 186 residues: CoB--CoM heterodisulfide reductase iron-sulfur subunit C 2 (186 aa).

2 consecutive 4Fe-4S ferredoxin-type domains span residues 26-56 (GEDI…AYRT) and 67-99 (LDDV…TEII). [4Fe-4S] cluster is bound by residues cysteine 36, cysteine 39, cysteine 42, cysteine 46, cysteine 79, cysteine 82, cysteine 85, and cysteine 89.

It belongs to the HdrC family. In terms of assembly, the heterodisulfide reductase is composed of three subunits; HdrA, HdrB and HdrC. [4Fe-4S] cluster is required as a cofactor.

The protein operates within cofactor metabolism; coenzyme M-coenzyme B heterodisulfide reduction; coenzyme B and coenzyme M from coenzyme M-coenzyme B heterodisulfide: step 1/1. Its function is as follows. Part of a complex that catalyzes the reversible reduction of CoM-S-S-CoB to the thiol-coenzymes H-S-CoM (coenzyme M) and H-S-CoB (coenzyme B). The polypeptide is CoB--CoM heterodisulfide reductase iron-sulfur subunit C 2 (hdrC2) (Methanocaldococcus jannaschii (strain ATCC 43067 / DSM 2661 / JAL-1 / JCM 10045 / NBRC 100440) (Methanococcus jannaschii)).